The primary structure comprises 1175 residues: Structural maintenance of chromosomes protein 2-1 (1175 aa).

A Zinc-hook domain is found at 2–1161; that stretch reads HIKEICLEGF…NVLFRTKFVD (1160 aa). 32–39 serves as a coordination point for ATP; the sequence is GLNGSGKS. A coiled-coil region spans residues 172-508; the sequence is RMYENKKEAA…AQLANFQFTY (337 aa). One can recognise an SMC hinge domain in the interval 518 to 638; it reads SKVKGVVAKL…KTTDVAKEVA (121 aa). Positions 673 to 1028 form a coiled coil; sequence LRKLHDLAEA…ELDEKKKETL (356 aa).

Belongs to the SMC family. SMC2 subfamily. Forms a heterodimer with SMC4. Component of the condensin complex, which contains the SMC2 and SMC4 heterodimer, and three non SMC subunits that probably regulate the complex: CAPH, CAPD2 and CAPG. In terms of tissue distribution, highly expressed in roots and young floral buds.

It is found in the nucleus. In terms of biological role, central component of the condensin complex, a complex required for conversion of interphase chromatin into mitotic-like condense chromosomes. The condensin complex probably introduces positive supercoils into relaxed DNA in the presence of type I topoisomerases and converts nicked DNA into positive knotted forms in the presence of type II topoisomerases. Also involved in chromosome segregation in meiosis. This is Structural maintenance of chromosomes protein 2-1 (SMC2-1) from Arabidopsis thaliana (Mouse-ear cress).